The sequence spans 211 residues: MVSRMVSTMLSGLLFWLASGWTPAFAYSPRTPDRVSEADIQRLLHGVMEQLGIARPRVEYPAHQAMNLVGPQSIEGGAHEGLQHLGPFGNIPNIVAELTGDNIPKDFSEDQGYPDPPNPCPVGKTDDGCLENTPDTAEFSREFQLHQHLFDPEHDYPGLGKWNKKLLYEKMKGGERRKRRSVNPYLQGQRLDNVVAKKSVPHFSDEDKDPE.

The signal sequence occupies residues 1-26; sequence MVSRMVSTMLSGLLFWLASGWTPAFA. Residues 106-132 are disordered; sequence DFSEDQGYPDPPNPCPVGKTDDGCLEN. C120 and C129 are joined by a disulfide. 2 positions are modified to phosphoserine: S140 and S204. The tract at residues 173–211 is disordered; the sequence is GGERRKRRSVNPYLQGQRLDNVVAKKSVPHFSDEDKDPE.

Belongs to the 7B2 family. As to quaternary structure, interacts with PCSK2/PC2 early in the secretory pathway. Dissociation occurs at later stages. In terms of processing, proteolytically cleaved in the Golgi by a furin-like convertase to generate bioactive peptides. Sulfated on tyrosine residues.

It localises to the secreted. Functionally, acts as a molecular chaperone for PCSK2/PC2, preventing its premature activation in the regulated secretory pathway. Binds to inactive PCSK2 in the endoplasmic reticulum and facilitates its transport from there to later compartments of the secretory pathway where it is proteolytically matured and activated. Also required for cleavage of PCSK2 but does not appear to be involved in its folding. Plays a role in regulating pituitary hormone secretion. The C-terminal peptide inhibits PCSK2 in vitro. The sequence is that of Neuroendocrine protein 7B2 (SCG5) from Pan troglodytes (Chimpanzee).